The following is a 24-amino-acid chain: Humanin (24 aa).

The sufficient to interact with BID and BIM and to suppress BID and BIM activity stretch occupies residues 1 to 12 (MAPRGFSCLLLL). The interval 3–19 (PRGFSCLLLLTSEIDLP) is sufficient for neuroprotective activity. The tract at residues 5-12 (GFSCLLLL) is sufficient to interact with MPP8. Required for secretion stretches follow at residues 9–11 (LLL) and 19–20 (PV).

In terms of assembly, homodimer. Interacts with amyloid-beta protein 42 (Abeta42); the interaction prevents Abeta42 fibril formation. Interacts with BAX; forms fibers with BAX which results in BAX conformational changes and sequestering of BAX into the fibers, preventing BAX activation. Interacts with both full-length BID and cleaved BID p15; forms fibers with BID which results in BID conformational changes and sequestering of BID into the fibers, preventing BID activation. Interacts with BIM isoform BimEL but not with BIM isoforms BimL or BimS; the interaction prevents BIM-induced apoptosis. Interacts with IGFBP3; competes with importin KPNB1 for binding to IGFBP3, blocking IGFBP3 nuclear import. Interacts with TRIM11. Interacts with MPP8. As to expression, expressed in testis, seminal plasma and sperm (at protein level). Higher seminal plasma levels are associated with normospermia than with oligospermia, asthenospermia or oligoasthenospermia (at protein level). Higher sperm levels are associated with normospermia than with asthenospermia (at protein level). Expressed in retinal epithelial cells (at protein level). Expressed in the heart, skeletal muscle, kidney and liver. Lesser but significant expression is observed in the brain and the gastrointestinal tract. Expressed in the AD brain, where it is found in some of the large intact neurons of the occipital lobes and small and round reactive glial cells in the hippocampus.

Its subcellular location is the secreted. It is found in the cytoplasm. The protein localises to the cell projection. The protein resides in the cilium. It localises to the flagellum. Its subcellular location is the nucleus. It is found in the mitochondrion. Functionally, plays a role as a neuroprotective factor. Protects against neuronal cell death induced by multiple different familial Alzheimer disease genes and amyloid-beta proteins in Alzheimer disease. Mediates its neuroprotective effect by interacting with a receptor complex composed of IL6ST/GP130, IL27RA/WSX1 and CNTFR. Also acts as a ligand for G-protein coupled receptors FPR2/FPRL1 and FPR3/FPRL2. Inhibits amyloid-beta protein 40 fibril formation. Also inhibits amyloid-beta protein 42 fibril formation. Suppresses apoptosis by binding to BAX and preventing the translocation of BAX from the cytosol to mitochondria. Also suppresses apoptosis by binding to BID and inhibiting the interaction of BID with BAX and BAK which prevents oligomerization of BAX and BAK and suppresses release of apoptogenic proteins from mitochondria. Forms fibers with BAX and also with BID, inducing BAX and BID conformational changes and sequestering them into the fibers which prevents their activation. Can also suppress apoptosis by interacting with BIM isoform BimEL, inhibiting BimEL-induced activation of BAX, blocking oligomerization of BAX and BAK, and preventing release of apoptogenic proteins from mitochondria. Plays a role in up-regulation of anti-apoptotic protein BIRC6/APOLLON, leading to inhibition of neuronal cell death. Binds to IGFBP3 and specifically blocks IGFBP3-induced cell death. Competes with importin KPNB1 for binding to IGFBP3 which is likely to block IGFBP3 nuclear import. Induces chemotaxis of mononuclear phagocytes via FPR2/FPRL1. Reduces aggregation and fibrillary formation by suppressing the effect of APP on mononuclear phagocytes and acts by competitively inhibiting the access of FPR2 to APP. Protects retinal pigment epithelium (RPE) cells against oxidative stress-induced and endoplasmic reticulum (ER) stress-induced apoptosis. Promotes mitochondrial biogenesis in RPE cells following oxidative stress and promotes STAT3 phosphorylation which leads to inhibition of CASP3 release. Also reduces CASP4 levels in RPE cells, suppresses ER stress-induced mitochondrial superoxide production and plays a role in up-regulation of mitochondrial glutathione. Reduces testicular hormone deprivation-induced apoptosis of germ cells at the nonandrogen-sensitive stages of the seminiferous epithelium cycle. Protects endothelial cells against free fatty acid-induced inflammation by suppressing oxidative stress, reducing expression of TXNIP and inhibiting activation of the NLRP3 inflammasome which inhibits expression of pro-inflammatory cytokines IL1B and IL18. Protects against high glucose-induced endothelial cell dysfunction by mediating activation of ERK5 which leads to increased expression of transcription factor KLF2 and prevents monocyte adhesion to endothelial cells. Inhibits the inflammatory response in astrocytes. Increases the expression of PPARGC1A/PGC1A in pancreatic beta cells which promotes mitochondrial biogenesis. Increases insulin sensitivity. In Homo sapiens (Human), this protein is Humanin.